A 270-amino-acid polypeptide reads, in one-letter code: Glucosamine-6-phosphate deaminase (270 aa).

Asp72 acts as the Proton acceptor; for enolization step in catalysis. Residue Asp141 is the For ring-opening step of the active site. The active-site Proton acceptor; for ring-opening step is His143. Glu148 functions as the For ring-opening step in the catalytic mechanism.

Belongs to the glucosamine/galactosamine-6-phosphate isomerase family. NagB subfamily.

It catalyses the reaction alpha-D-glucosamine 6-phosphate + H2O = beta-D-fructose 6-phosphate + NH4(+). It functions in the pathway amino-sugar metabolism; N-acetylneuraminate degradation; D-fructose 6-phosphate from N-acetylneuraminate: step 5/5. Allosterically activated by N-acetylglucosamine 6-phosphate (GlcNAc6P). Its function is as follows. Catalyzes the reversible isomerization-deamination of glucosamine 6-phosphate (GlcN6P) to form fructose 6-phosphate (Fru6P) and ammonium ion. This chain is Glucosamine-6-phosphate deaminase, found in Parabacteroides distasonis (strain ATCC 8503 / DSM 20701 / CIP 104284 / JCM 5825 / NCTC 11152).